A 20-amino-acid polypeptide reads, in one-letter code: Brevinin-1T (20 aa).

The cysteines at positions 14 and 20 are disulfide-linked.

It belongs to the frog skin active peptide (FSAP) family. Brevinin subfamily. As to expression, expressed by the skin glands.

The protein localises to the secreted. Functionally, antibacterial activity against representative Gram-negative and Gram-positive bacteria and exhibits a very high hemolytic activity. In Rana temporaria (European common frog), this protein is Brevinin-1T.